Consider the following 125-residue polypeptide: Mitochondrial import inner membrane translocase subunit tim16-A (125 aa).

Positions 58 to 110 (EAQQILNVSKLTPEEIQKNYEHLFKVNDKGLGGSFYLQSKVVRAKERLDQEME) are J-like.

Belongs to the TIM16/PAM16 family. Probable component of the PAM complex at least composed of 1 mitochondrial HSP70 protein, 1 GRPE, 1 TIMM44, 1 TIMM16/PAM16 and 1 TIMM14. Associates with the TIM23 complex.

It localises to the mitochondrion inner membrane. Functionally, regulates ATP-dependent protein translocation into the mitochondrial matrix. This chain is Mitochondrial import inner membrane translocase subunit tim16-A (pam16-a), found in Xenopus laevis (African clawed frog).